The primary structure comprises 4194 residues: Hybrid PKS-NRPS synthetase pydA (4194 aa).

The region spanning 14–450 (REPIAVVGSG…GTNAHAIVEN (437 aa)) is the Ketosynthase family 3 (KS3) domain. Catalysis depends on for beta-ketoacyl synthase activity residues C187, H326, and H370. Positions 565-887 (VFTGQGAQWA…QRGKDDVQAF (323 aa)) constitute a Malonyl-CoA:ACP transacylase (MAT) domain. Positions 953–1088 (HPLLGTRTTD…GRVIVITGEA (136 aa)) are N-terminal hotdog fold. The region spanning 953-1257 (HPLLGTRTTD…VVSFSEPTAE (305 aa)) is the PKS/mFAS DH domain. Catalysis depends on H985, which acts as the Proton acceptor; for dehydratase activity. A C-terminal hotdog fold region spans residues 1103–1257 (LVDIPEDRFY…VVSFSEPTAE (155 aa)). The active-site Proton donor; for dehydratase activity is D1163. The segment at 1302-1596 (YMRQLASLFP…FSGVDSTTHE (295 aa)) is methyltransferase (cMeT) domain. The region spanning 2141–2314 (TYVFFGLTSD…AGSILHIGAV (174 aa)) is the Ketoreductase (KR) domain. Residues 2421–2505 (TTAEEALEIV…ELVEFAVENM (85 aa)) form the Carrier 1 domain. An O-(pantetheine 4'-phosphoryl)serine modification is found at S2465. The tract at residues 2512 to 2583 (NMSDSLNAVP…ERDSSTASLE (72 aa)) is disordered. Over residues 2526–2547 (APVIPASPPSGSVSSAPSSDPP) the composition is skewed to low complexity. The segment covering 2550–2565 (TAETSQHLSESSSKTS) has biased composition (polar residues). Residues 2566–2577 (QPDEKQSEERDS) show a composition bias toward basic and acidic residues. The tract at residues 2591 to 3023 (EKVLPVSPGQ…QILKDVSLFT (433 aa)) is condensation. The segment at 3056-3467 (ANPPQEIALR…RIEGDTQIKL (412 aa)) is adenylation. Residues 3580–3660 (TQLTEAESEL…AMAAVIQDLS (81 aa)) form the Carrier 2 domain. O-(pantetheine 4'-phosphoryl)serine is present on S3620. The region spanning 3701–3920 (ITGATGFLGK…VDLISVERAA (220 aa)) is the Thioester reductase (TE) domain. Disordered stretches follow at residues 4031–4110 (RRDK…DEQI) and 4163–4194 (KGEY…EPDD). Residues 4057–4072 (RGRDVSPRHPALDHPD) show a composition bias toward basic and acidic residues. The span at 4174 to 4183 (EEAEEAEWQC) shows a compositional bias: acidic residues. The span at 4184-4194 (DEGHGDGEPDD) shows a compositional bias: basic and acidic residues.

It in the C-terminal section; belongs to the NRP synthetase family. Pantetheine 4'-phosphate is required as a cofactor.

Its pathway is mycotoxin biosynthesis. In terms of biological role, hybrid PKS-NRPS synthetase; part of the gene cluster that mediates the biosynthesis of pyrrocidines, fungal natural products containing a macrocyclic para-cyclophane connected to a decahydrofluorene ring system that show potent antibiotic activities toward Gram-negative bacteria. Within the pathway, the PKS-NRPS pydA, with the help of the trans-enoyl reductase pydC, synthesize the polyketide-tyrosyl acyl thioester product which can be reductively off-loaded by the terminal reductase (R) domain in pydA. The PKS module of pydA acts in combination with the trans-acting enoyl reductase pydC to produce a methylated polyketide attached to the ACP domain. In parallel, the adenylation (A) domain of the NRPS module activated L-tyrosine, which is then transferred to the ACP domain. The condensation (C) domain subsequently link this group to the polyketide chain, forming an enzyme-bound amide. The alpha/beta hydrolase pydG is then required to catalyze the subsequent Knoevenagel condensation that affords the 3-pyrrolin-2-one ring, whereas the four proteins pydB, pydE, pydX and pydZ then function synergistically to form the cyclophane. PydB and the membrane-bound pydX and pydZ are lipid-binding proteins that can sequester and mold the pdyG product into the inverse S-shape. Binding of the medium chain reductase pydE to the complex would trigger the cascade oxidative cyclization. PydY is involved in the Diels-Alder cycloaddition that forms the decahydrofluorene core. Additional non-enzymatic hydroxylation yields pyrrocidine A2 which can be further reduced into pyrrocidine B by an endogenous reductase. This is Hybrid PKS-NRPS synthetase pydA from Acremonium sp.